An 861-amino-acid polypeptide reads, in one-letter code: Rod cGMP-specific 3',5'-cyclic phosphodiesterase subunit alpha (861 aa).

At Gly-2 the chain carries N-acetylglycine. 2 consecutive GAF domains span residues 73–222 and 254–431; these read QAER…NLIM and DIER…GWSV. Positions 483 to 816 constitute a PDEase domain; that stretch reads EEEELAEILQ…KEWKALADEY (334 aa). His-559 (proton donor) is an active-site residue. 4 residues coordinate a divalent metal cation: His-563, His-599, Asp-600, and Asp-720. Residues 821 to 861 are disordered; that stretch reads KALEEEKQKQQTAKQGAAGDQPGGNPSPAGGAPASKSCCIQ. A compositionally biased stretch (low complexity) spans 830–861; the sequence is QQTAKQGAAGDQPGGNPSPAGGAPASKSCCIQ. Cys-858 bears the Cysteine methyl ester mark. Cys-858 carries S-farnesyl cysteine lipidation. Positions 859–861 are cleaved as a propeptide — removed in mature form; sequence CIQ.

It belongs to the cyclic nucleotide phosphodiesterase family. Oligomer composed of two catalytic chains (alpha and beta), an inhibitory chain (gamma) and the delta chain. A divalent metal cation serves as cofactor.

It is found in the cell membrane. It localises to the cell projection. Its subcellular location is the cilium. The protein localises to the photoreceptor outer segment. It catalyses the reaction 3',5'-cyclic GMP + H2O = GMP + H(+). Its function is as follows. Rod-specific cGMP phosphodiesterase that catalyzes the hydrolysis of 3',5'-cyclic GMP. This protein participates in processes of transmission and amplification of the visual signal. The sequence is that of Rod cGMP-specific 3',5'-cyclic phosphodiesterase subunit alpha from Canis lupus familiaris (Dog).